A 224-amino-acid chain; its full sequence is MKNIEKLERSLTYEFKDKNLLIHALTHKSFKKSYNNERLEFLGDAVLDLVVGEYLFHKFAKDAEGDLSKLRAALVNEKSFAKIANSLNLGDFIFMSVAEENNGGREKPSILSDALEAIIGAIHLEAGFEFTKTIALRLIEKNFPQIDAKILIKDYKTKLQEITQGKIGQTPQYETVRAFGPDHLKQFEIALMLDGKELARAIAGSKKEAQQMAAKIALEKLGAL.

In terms of domain architecture, RNase III spans 4–127 (IEKLERSLTY…IIGAIHLEAG (124 aa)). E40 provides a ligand contact to Mg(2+). The active site involves D44. D113 and E116 together coordinate Mg(2+). Residue E116 is part of the active site. Positions 154-223 (DYKTKLQEIT…AKIALEKLGA (70 aa)) constitute a DRBM domain.

This sequence belongs to the ribonuclease III family. In terms of assembly, homodimer. It depends on Mg(2+) as a cofactor.

The protein resides in the cytoplasm. It carries out the reaction Endonucleolytic cleavage to 5'-phosphomonoester.. In terms of biological role, digests double-stranded RNA. Involved in the processing of primary rRNA transcript to yield the immediate precursors to the large and small rRNAs (23S and 16S). Processes some mRNAs, and tRNAs when they are encoded in the rRNA operon. Processes pre-crRNA and tracrRNA of type II CRISPR loci if present in the organism. The sequence is that of Ribonuclease 3 from Campylobacter jejuni (strain RM1221).